The sequence spans 295 residues: 4-hydroxybenzoate octaprenyltransferase (295 aa).

The next 8 membrane-spanning stretches (helical) occupy residues 28 to 48, 51 to 71, 101 to 121, 124 to 144, 159 to 179, 220 to 240, 242 to 262, and 274 to 294; these read AGWLLLLWPTLSALWIAAGGF, WHLLAVFTLGTILMRSAGCCV, ALGVGAVLALVSFGLVLTTNA, IAWSLPALAVTIAYPFAKRFV, IPMAFTAVGGAVPMLAAWLVL, VMAFYLAFVALWAWALAPFGL, WPLHAVLAAMLLQVAWHWRLI, and FTGNHWLGFTLFAGIVAGFAL.

This sequence belongs to the UbiA prenyltransferase family. Requires Mg(2+) as cofactor.

It is found in the cell inner membrane. It carries out the reaction all-trans-octaprenyl diphosphate + 4-hydroxybenzoate = 4-hydroxy-3-(all-trans-octaprenyl)benzoate + diphosphate. It functions in the pathway cofactor biosynthesis; ubiquinone biosynthesis. Its function is as follows. Catalyzes the prenylation of para-hydroxybenzoate (PHB) with an all-trans polyprenyl group. Mediates the second step in the final reaction sequence of ubiquinone-8 (UQ-8) biosynthesis, which is the condensation of the polyisoprenoid side chain with PHB, generating the first membrane-bound Q intermediate 3-octaprenyl-4-hydroxybenzoate. This is 4-hydroxybenzoate octaprenyltransferase from Paracidovorax citrulli (strain AAC00-1) (Acidovorax citrulli).